The chain runs to 335 residues: NADH-quinone oxidoreductase subunit H (335 aa).

A run of 8 helical transmembrane segments spans residues 12–32, 81–101, 114–134, 154–174, 187–207, 238–258, 270–290, and 307–327; these read IIAVVKAIVVLLAVVVCGALL, VIFTLAPVVAMSALLIAFAVI, IGLLFFFAMAGLSVYAVLFAG, VSYEVFMGLALMGIVVQVGSF, LWFIIPQFFGFCTFFIAGVAV, FFVGEYIGIILISALLVTLFF, SLAFFWFALKTAFFIMLFILL, and WKFCLPLTLINLLVTAAIVLL.

It belongs to the complex I subunit 1 family. In terms of assembly, NDH-1 is composed of 13 different subunits. Subunits NuoA, H, J, K, L, M, N constitute the membrane sector of the complex.

The protein localises to the cell inner membrane. The enzyme catalyses a quinone + NADH + 5 H(+)(in) = a quinol + NAD(+) + 4 H(+)(out). In terms of biological role, NDH-1 shuttles electrons from NADH, via FMN and iron-sulfur (Fe-S) centers, to quinones in the respiratory chain. The immediate electron acceptor for the enzyme in this species is believed to be ubiquinone. Couples the redox reaction to proton translocation (for every two electrons transferred, four hydrogen ions are translocated across the cytoplasmic membrane), and thus conserves the redox energy in a proton gradient. This subunit may bind ubiquinone. The polypeptide is NADH-quinone oxidoreductase subunit H (Pseudomonas syringae pv. tomato (strain ATCC BAA-871 / DC3000)).